The primary structure comprises 252 residues: Imidazole glycerol phosphate synthase subunit HisF (252 aa).

Residues aspartate 11 and aspartate 130 contribute to the active site.

The protein belongs to the HisA/HisF family. In terms of assembly, heterodimer of HisH and HisF.

The protein resides in the cytoplasm. The enzyme catalyses 5-[(5-phospho-1-deoxy-D-ribulos-1-ylimino)methylamino]-1-(5-phospho-beta-D-ribosyl)imidazole-4-carboxamide + L-glutamine = D-erythro-1-(imidazol-4-yl)glycerol 3-phosphate + 5-amino-1-(5-phospho-beta-D-ribosyl)imidazole-4-carboxamide + L-glutamate + H(+). The protein operates within amino-acid biosynthesis; L-histidine biosynthesis; L-histidine from 5-phospho-alpha-D-ribose 1-diphosphate: step 5/9. In terms of biological role, IGPS catalyzes the conversion of PRFAR and glutamine to IGP, AICAR and glutamate. The HisF subunit catalyzes the cyclization activity that produces IGP and AICAR from PRFAR using the ammonia provided by the HisH subunit. The protein is Imidazole glycerol phosphate synthase subunit HisF of Hyphomonas neptunium (strain ATCC 15444).